A 718-amino-acid chain; its full sequence is Heat shock 70 kDa protein 7, chloroplastic (718 aa).

The N-terminal 92 residues, 1 to 92 (MASSAAQIHI…IDLGTTNSAV (92 aa)), are a transit peptide targeting the chloroplast. A compositionally biased stretch (polar residues) spans 668-678 (QIGQSLYNQPQ). Residues 668–718 (QIGQSLYNQPQPGGADSPPGGEASSSSDTSSSAKGGDNGGDVIDADFTDSN) are disordered.

Belongs to the heat shock protein 70 (TC 1.A.33) family. DnaK subfamily.

The protein resides in the plastid. The protein localises to the chloroplast stroma. Functionally, acts redundantly with HSP70-6 in the thermotolerance of germinating seeds. Plays an important role in the protein precursor import into chloroplasts. In cooperation with other chaperones, Hsp70s are key components that facilitate folding of de novo synthesized proteins, assist translocation of precursor proteins into organelles, and are responsible for degradation of damaged protein under stress conditions. The polypeptide is Heat shock 70 kDa protein 7, chloroplastic (HSP70-7) (Arabidopsis thaliana (Mouse-ear cress)).